Consider the following 197-residue polypeptide: Imidazoleglycerol-phosphate dehydratase (197 aa).

It belongs to the imidazoleglycerol-phosphate dehydratase family.

The protein resides in the cytoplasm. It carries out the reaction D-erythro-1-(imidazol-4-yl)glycerol 3-phosphate = 3-(imidazol-4-yl)-2-oxopropyl phosphate + H2O. Its pathway is amino-acid biosynthesis; L-histidine biosynthesis; L-histidine from 5-phospho-alpha-D-ribose 1-diphosphate: step 6/9. The chain is Imidazoleglycerol-phosphate dehydratase (hisB) from Streptomyces coelicolor (strain ATCC BAA-471 / A3(2) / M145).